The following is a 492-amino-acid chain: Glutamyl-tRNA(Gln) amidotransferase subunit A (492 aa).

Residues lysine 81 and serine 156 each act as charge relay system in the active site. Residue serine 180 is the Acyl-ester intermediate of the active site.

It belongs to the amidase family. GatA subfamily. In terms of assembly, heterotrimer of A, B and C subunits.

The enzyme catalyses L-glutamyl-tRNA(Gln) + L-glutamine + ATP + H2O = L-glutaminyl-tRNA(Gln) + L-glutamate + ADP + phosphate + H(+). Allows the formation of correctly charged Gln-tRNA(Gln) through the transamidation of misacylated Glu-tRNA(Gln) in organisms which lack glutaminyl-tRNA synthetase. The reaction takes place in the presence of glutamine and ATP through an activated gamma-phospho-Glu-tRNA(Gln). In Rhodococcus erythropolis (strain PR4 / NBRC 100887), this protein is Glutamyl-tRNA(Gln) amidotransferase subunit A.